Reading from the N-terminus, the 34-residue chain is Photosystem II reaction center protein M (34 aa).

The helical transmembrane segment at 5 to 25 (ILAFIATALFILIPTAFLLIL) threads the bilayer.

The protein belongs to the PsbM family. As to quaternary structure, PSII is composed of 1 copy each of membrane proteins PsbA, PsbB, PsbC, PsbD, PsbE, PsbF, PsbH, PsbI, PsbJ, PsbK, PsbL, PsbM, PsbT, PsbX, PsbY, PsbZ, Psb30/Ycf12, at least 3 peripheral proteins of the oxygen-evolving complex and a large number of cofactors. It forms dimeric complexes.

It is found in the plastid. The protein resides in the chloroplast thylakoid membrane. In terms of biological role, one of the components of the core complex of photosystem II (PSII). PSII is a light-driven water:plastoquinone oxidoreductase that uses light energy to abstract electrons from H(2)O, generating O(2) and a proton gradient subsequently used for ATP formation. It consists of a core antenna complex that captures photons, and an electron transfer chain that converts photonic excitation into a charge separation. This subunit is found at the monomer-monomer interface. This is Photosystem II reaction center protein M from Anthoceros angustus (Hornwort).